A 193-amino-acid chain; its full sequence is Mediator of RNA polymerase II transcription subunit 20 (193 aa).

Belongs to the Mediator complex subunit 20 family. In terms of assembly, component of the Mediator complex.

It localises to the nucleus. Its function is as follows. Component of the Mediator complex, a coactivator involved in the regulated transcription of nearly all RNA polymerase II-dependent genes. Mediator functions as a bridge to convey information from gene-specific regulatory proteins to the basal RNA polymerase II transcription machinery. The Mediator complex, having a compact conformation in its free form, is recruited to promoters by direct interactions with regulatory proteins and serves for the assembly of a functional preinitiation complex with RNA polymerase II and the general transcription factors. The polypeptide is Mediator of RNA polymerase II transcription subunit 20 (med20) (Schizosaccharomyces pombe (strain 972 / ATCC 24843) (Fission yeast)).